A 60-amino-acid chain; its full sequence is MAVPARRTSKAKKNKRRTHYKVTAPSVNFDETTGDYSRSHRVSLKGYYKGRKIAKAASAE.

Belongs to the bacterial ribosomal protein bL32 family.

This is Large ribosomal subunit protein bL32 from Streptococcus pneumoniae serotype 19F (strain G54).